The chain runs to 267 residues: MAALVVTEPGRALLRAGTERLLRGGIQELLRPRHEGNSPGLARDFSLSQNRGTVIVERWWKVPLAGEGRKPRLHRRHRVYKLVEDTKHRPKENLELILTQSVENIGVRGDLVSVRKSLGRNALLPQGLAVYASPENKKLFEEEKSLRQEGKLEKLQTKAGEVTVKFLKSCRLEVGMKNNVKWELNPEIVARHFFKNLGVVVAPHTLKLPEEPITRWGEYWCEVTVNGLDTIRVPMSVVNFEKPKTKRYKYWLAQQTAKRMAPTSPQI.

The transit peptide at methionine 1 to glycine 52 directs the protein to the mitochondrion.

The protein belongs to the bacterial ribosomal protein bL9 family. As to quaternary structure, component of the mitochondrial ribosome large subunit (39S) which comprises a 16S rRNA and about 50 distinct proteins.

It is found in the mitochondrion. This is Large ribosomal subunit protein bL9m (MRPL9) from Papio anubis (Olive baboon).